The following is a 184-amino-acid chain: Putative lyase MJ0807 (184 aa).

This sequence belongs to the chorismate pyruvate-lyase type 2 family.

This Methanocaldococcus jannaschii (strain ATCC 43067 / DSM 2661 / JAL-1 / JCM 10045 / NBRC 100440) (Methanococcus jannaschii) protein is Putative lyase MJ0807.